Consider the following 310-residue polypeptide: Aspartate carbamoyltransferase catalytic subunit (310 aa).

Carbamoyl phosphate-binding residues include Arg-58 and Thr-59. An L-aspartate-binding site is contributed by Lys-86. The carbamoyl phosphate site is built by Arg-108, His-136, and Gln-139. Arg-169 and Arg-224 together coordinate L-aspartate. Gly-265 and Pro-266 together coordinate carbamoyl phosphate.

This sequence belongs to the aspartate/ornithine carbamoyltransferase superfamily. ATCase family. As to quaternary structure, heterododecamer (2C3:3R2) of six catalytic PyrB chains organized as two trimers (C3), and six regulatory PyrI chains organized as three dimers (R2).

It catalyses the reaction carbamoyl phosphate + L-aspartate = N-carbamoyl-L-aspartate + phosphate + H(+). Its pathway is pyrimidine metabolism; UMP biosynthesis via de novo pathway; (S)-dihydroorotate from bicarbonate: step 2/3. In terms of biological role, catalyzes the condensation of carbamoyl phosphate and aspartate to form carbamoyl aspartate and inorganic phosphate, the committed step in the de novo pyrimidine nucleotide biosynthesis pathway. The sequence is that of Aspartate carbamoyltransferase catalytic subunit from Citrifermentans bemidjiense (strain ATCC BAA-1014 / DSM 16622 / JCM 12645 / Bem) (Geobacter bemidjiensis).